We begin with the raw amino-acid sequence, 237 residues long: uncharacterized protein (237 aa).

Helical transmembrane passes span isoleucine 19–tryptophan 39, tyrosine 51–serine 71, isoleucine 81–valine 101, isoleucine 106–leucine 126, phenylalanine 136–methionine 156, arginine 159–glycine 179, and leucine 209–tryptophan 229.

It localises to the cell membrane. This is an uncharacterized protein from Escherichia coli (strain K12).